A 198-amino-acid chain; its full sequence is Probable GTP-binding protein EngB (198 aa).

Residues 22-195 (NRVEVAFVGR…IDNLFLEFAT (174 aa)) enclose the EngB-type G domain. Residues 30–37 (GRSNVGKS), 57–61 (GKTRL), 75–78 (DLPG), 142–145 (TKSD), and 174–176 (FSS) contribute to the GTP site. 2 residues coordinate Mg(2+): Ser-37 and Thr-59.

Belongs to the TRAFAC class TrmE-Era-EngA-EngB-Septin-like GTPase superfamily. EngB GTPase family. It depends on Mg(2+) as a cofactor.

In terms of biological role, necessary for normal cell division and for the maintenance of normal septation. This Clostridium beijerinckii (strain ATCC 51743 / NCIMB 8052) (Clostridium acetobutylicum) protein is Probable GTP-binding protein EngB.